A 151-amino-acid chain; its full sequence is Protein A151R (151 aa).

Residues His102, Cys109, Cys132, and Cys135 each coordinate Zn(2+). A Thioredoxin WCTKC motif motif is present at residues Trp131–Cys135.

It belongs to the asfivirus A151R family. As to quaternary structure, monomer. Homodimer. Interacts with protein B119L. Interacts with membrane protein E248R. The cofactor is Zn(2+).

In terms of biological role, may participate in a redox cascade for the formation of disulfide bonds in viral proteins. The protein is Protein A151R of African swine fever virus (strain Badajoz 1971 Vero-adapted) (Ba71V).